A 208-amino-acid chain; its full sequence is dITP/XTP pyrophosphatase (208 aa).

15–20 (SHNAGK) serves as a coordination point for substrate. Mg(2+) is bound by residues Glu47 and Asp76. Catalysis depends on Asp76, which acts as the Proton acceptor. Residues Ser77, 157–160 (HGYD), Lys180, and 185–186 (HR) each bind substrate.

It belongs to the HAM1 NTPase family. As to quaternary structure, homodimer. Mg(2+) is required as a cofactor.

The enzyme catalyses XTP + H2O = XMP + diphosphate + H(+). It carries out the reaction dITP + H2O = dIMP + diphosphate + H(+). The catalysed reaction is ITP + H2O = IMP + diphosphate + H(+). Its function is as follows. Pyrophosphatase that catalyzes the hydrolysis of nucleoside triphosphates to their monophosphate derivatives, with a high preference for the non-canonical purine nucleotides XTP (xanthosine triphosphate), dITP (deoxyinosine triphosphate) and ITP. Seems to function as a house-cleaning enzyme that removes non-canonical purine nucleotides from the nucleotide pool, thus preventing their incorporation into DNA/RNA and avoiding chromosomal lesions. The polypeptide is dITP/XTP pyrophosphatase (Gluconobacter oxydans (strain 621H) (Gluconobacter suboxydans)).